A 536-amino-acid polypeptide reads, in one-letter code: Membrane protein insertase YidC (536 aa).

The next 5 membrane-spanning stretches (helical) occupy residues Leu-3–Trp-23, Ile-346–Phe-366, Gly-417–Ile-437, Leu-454–Ile-474, and Ile-494–Leu-514.

Belongs to the OXA1/ALB3/YidC family. Type 1 subfamily. As to quaternary structure, interacts with the Sec translocase complex via SecD. Specifically interacts with transmembrane segments of nascent integral membrane proteins during membrane integration.

It localises to the cell membrane. Functionally, required for the insertion and/or proper folding and/or complex formation of integral membrane proteins into the membrane. Involved in integration of membrane proteins that insert both dependently and independently of the Sec translocase complex, as well as at least some lipoproteins. Aids folding of multispanning membrane proteins. In Buchnera aphidicola subsp. Baizongia pistaciae (strain Bp), this protein is Membrane protein insertase YidC.